A 375-amino-acid chain; its full sequence is Growth/differentiation factor 8 (375 aa).

The N-terminal stretch at 1-23 is a signal peptide; that stretch reads MQKLQIFVYIYLFMLLVAGPVDL. A propeptide spanning residues 24 to 266 is cleaved from the precursor; that stretch reads NENSEQKENV…VTDTPKRSRR (243 aa). N-linked (GlcNAc...) asparagine glycosylation is found at asparagine 48 and asparagine 71. 4 disulfide bridges follow: cysteine 272-cysteine 282, cysteine 281-cysteine 340, cysteine 309-cysteine 372, and cysteine 313-cysteine 374.

The protein belongs to the TGF-beta family. In terms of assembly, homodimer; disulfide-linked. Interacts with WFIKKN2, leading to inhibit its activity. Interacts with FSTL3. Post-translationally, synthesized as large precursor molecule that undergoes proteolytic cleavage to generate an N-terminal propeptide and a disulfide linked C-terminal dimer, which is the biologically active molecule. The circulating form consists of a latent complex of the C-terminal dimer and other proteins, including its propeptide, which maintain the C-terminal dimer in a latent, inactive state. Ligand activation requires additional cleavage of the prodomain by a tolloid-like metalloproteinase.

The protein localises to the secreted. Functionally, acts specifically as a negative regulator of skeletal muscle growth. The chain is Growth/differentiation factor 8 (MSTN) from Ovis aries (Sheep).